Here is a 391-residue protein sequence, read N- to C-terminus: Suppressor APC domain-containing protein 2 (391 aa).

Residues 1–20 form a disordered region; that stretch reads MAVAAMAERGRLSHAAPAPS. A Phosphothreonine modification is found at Thr-218. Residues 226–277 adopt a coiled-coil conformation; it reads SLLKQMKELDQEQEVLLQGLEMMARGRDWYQQQLQRVQERQRRLSQSRAAAD. Residue Ser-283 is modified to Phosphoserine. A coiled-coil region spans residues 340–381; that stretch reads LKEQNRLLTQEVTDKSERITQLEQEKSALIKQLFEARALSQQ.

In terms of assembly, interacts with a spindle orientation complex at least composed of GNAI1, GPSM2 and NUMA1. Interacts with GPSM2 (via TPR motifs); this interaction is required to prevent GPSM2 anchoring at the mitotic apical cortex and is inhibited in presence of NUMA1 in a dose dependent manner. Interacts with PARD3. Expressed in the retina. Expressed in retinal progenitor cells and newly differentiated neurons but not in mature retinal cells (at protein level).

Its subcellular location is the cytoplasm. The protein localises to the nucleus. It localises to the cell cortex. It is found in the apical cell membrane. The protein resides in the cell junction. Its subcellular location is the tight junction. Plays a role in planar mitotic spindle orientation in retinal progenitor cells (RPCs) and promotes the production of symmetric terminal divisions. Negatively regulates the mitotic apical cortex localization of GPSM2. Involved also in positive regulation of cell proliferation and tumor cell growth. In Mus musculus (Mouse), this protein is Suppressor APC domain-containing protein 2.